The primary structure comprises 285 residues: HTH-type transcriptional regulator MurR (285 aa).

The 77-residue stretch at 1–77 (MLYLTKIRNA…MALIGEYSAS (77 aa)) folds into the HTH rpiR-type domain. Positions 37 to 56 (SRKMAKLLGISQSSIVKFAQ) form a DNA-binding region, H-T-H motif. An SIS domain is found at 128–268 (IIEAISKAPF…FVGLVQLNDV (141 aa)).

As to quaternary structure, homotetramer.

It participates in amino-sugar metabolism; N-acetylmuramate degradation [regulation]. Functionally, represses the expression of the murPQ operon involved in the uptake and degradation of N-acetylmuramic acid (MurNAc). Binds to two adjacent inverted repeats within the operator region. MurNAc 6-phosphate, the substrate of MurQ, is the specific inducer that weakens binding of MurR to the operator. This Escherichia coli O17:K52:H18 (strain UMN026 / ExPEC) protein is HTH-type transcriptional regulator MurR.